The sequence spans 349 residues: 4-hydroxy-3-methylbut-2-en-1-yl diphosphate synthase (flavodoxin) (349 aa).

[4Fe-4S] cluster is bound by residues cysteine 264, cysteine 267, cysteine 299, and glutamate 306.

This sequence belongs to the IspG family. [4Fe-4S] cluster serves as cofactor.

The catalysed reaction is (2E)-4-hydroxy-3-methylbut-2-enyl diphosphate + oxidized [flavodoxin] + H2O + 2 H(+) = 2-C-methyl-D-erythritol 2,4-cyclic diphosphate + reduced [flavodoxin]. It participates in isoprenoid biosynthesis; isopentenyl diphosphate biosynthesis via DXP pathway; isopentenyl diphosphate from 1-deoxy-D-xylulose 5-phosphate: step 5/6. Functionally, converts 2C-methyl-D-erythritol 2,4-cyclodiphosphate (ME-2,4cPP) into 1-hydroxy-2-methyl-2-(E)-butenyl 4-diphosphate. In Clostridium perfringens (strain 13 / Type A), this protein is 4-hydroxy-3-methylbut-2-en-1-yl diphosphate synthase (flavodoxin).